A 111-amino-acid chain; its full sequence is DNA-directed RNA polymerase subunit Rpo11 (111 aa).

The protein belongs to the archaeal Rpo11/eukaryotic RPB11/RPC19 RNA polymerase subunit family. In terms of assembly, part of the RNA polymerase complex.

The protein resides in the cytoplasm. It carries out the reaction RNA(n) + a ribonucleoside 5'-triphosphate = RNA(n+1) + diphosphate. DNA-dependent RNA polymerase (RNAP) catalyzes the transcription of DNA into RNA using the four ribonucleoside triphosphates as substrates. In Thermoplasma volcanium (strain ATCC 51530 / DSM 4299 / JCM 9571 / NBRC 15438 / GSS1), this protein is DNA-directed RNA polymerase subunit Rpo11.